Consider the following 370-residue polypeptide: Putative methylthioribose-1-phosphate isomerase (370 aa).

Residues 66 to 68 (RGA), arginine 109, and glutamine 217 each bind substrate. Aspartate 258 serves as the catalytic Proton donor. 268–269 (NK) provides a ligand contact to substrate.

Belongs to the eIF-2B alpha/beta/delta subunits family. MtnA subfamily.

It catalyses the reaction 5-(methylsulfanyl)-alpha-D-ribose 1-phosphate = 5-(methylsulfanyl)-D-ribulose 1-phosphate. Functionally, catalyzes the interconversion of methylthioribose-1-phosphate (MTR-1-P) into methylthioribulose-1-phosphate (MTRu-1-P). In Aeropyrum pernix (strain ATCC 700893 / DSM 11879 / JCM 9820 / NBRC 100138 / K1), this protein is Putative methylthioribose-1-phosphate isomerase.